The following is a 274-amino-acid chain: tRNA-cytidine(32) 2-sulfurtransferase (274 aa).

The PP-loop motif motif lies at 40–45 (SGGKDS). Residues Cys-115, Cys-118, and Cys-206 each contribute to the [4Fe-4S] cluster site.

It belongs to the TtcA family. Homodimer. Mg(2+) is required as a cofactor. The cofactor is [4Fe-4S] cluster.

The protein localises to the cytoplasm. The catalysed reaction is cytidine(32) in tRNA + S-sulfanyl-L-cysteinyl-[cysteine desulfurase] + AH2 + ATP = 2-thiocytidine(32) in tRNA + L-cysteinyl-[cysteine desulfurase] + A + AMP + diphosphate + H(+). It participates in tRNA modification. In terms of biological role, catalyzes the ATP-dependent 2-thiolation of cytidine in position 32 of tRNA, to form 2-thiocytidine (s(2)C32). The sulfur atoms are provided by the cysteine/cysteine desulfurase (IscS) system. The sequence is that of tRNA-cytidine(32) 2-sulfurtransferase from Pseudomonas fluorescens (strain ATCC BAA-477 / NRRL B-23932 / Pf-5).